The primary structure comprises 569 residues: MPYKISRAAYAGMFGPTVGDKVRLADTELFIEIEKDHTTYGEEVKFGGGKVIRDGMGQSQATRAEGAVDTVITNAVIVDHSGIYKADVGLKNGRIHAIGKAGNPDTQPGVTIIVGPSTEAIAGEGKILTAGGMDAHIHYICPQQIEEALMSGVTCMLGGGSGPAHGTLATTCTGAWHIERMIESFDAFPMNLALAGKGNASLPAPLEEMILAGASSLKLHEDWGTTPAAIDNCLTVADEYDVQVMIHTDTLNESGFVEDTVAAIRGRTIHAFHTEGAGGGHAPDIIKVCGNPNVIPSSTNPTRPYTVNTLAEHLDMLMVCHHLSPSIPEDIAFAESRIRKETIAAEDILHDIGAFSIISSDSQAMGRVGEVAIRTWQTADKMKRQRGRLKEETGENDNFRVRRYIAKYTINPAIAQGVSHEIGSVEVGKRADLVLWNPAFFGVKPEMVLLGGSIAAAPMGDPNASIPTPQPMHYRPMFAAYGKLRTNSSVTFVSQASLDGGLAQRLGVAKKLLAVKNVRGGISKASMIHNSLTPHIEVDPETYEVRADGELLTCEPATVLPMAQRYFLF.

A Urease domain is found at 131–569 (GGMDAHIHYI…LPMAQRYFLF (439 aa)). Residues H136, H138, and K218 each coordinate Ni(2+). Position 218 is an N6-carboxylysine (K218). H220 contributes to the substrate binding site. Residues H247 and H273 each contribute to the Ni(2+) site. The active-site Proton donor is H321. A Ni(2+)-binding site is contributed by D361.

This sequence belongs to the metallo-dependent hydrolases superfamily. Urease alpha subunit family. As to quaternary structure, heterotrimer of UreA (gamma), UreB (beta) and UreC (alpha) subunits. Three heterotrimers associate to form the active enzyme. Ni cation serves as cofactor. Post-translationally, carboxylation allows a single lysine to coordinate two nickel ions.

Its subcellular location is the cytoplasm. It carries out the reaction urea + 2 H2O + H(+) = hydrogencarbonate + 2 NH4(+). It participates in nitrogen metabolism; urea degradation; CO(2) and NH(3) from urea (urease route): step 1/1. In Agrobacterium fabrum (strain C58 / ATCC 33970) (Agrobacterium tumefaciens (strain C58)), this protein is Urease subunit alpha.